A 161-amino-acid polypeptide reads, in one-letter code: Pathogenesis-related protein 1 (161 aa).

The N-terminal stretch at 1 to 26 is a signal peptide; the sequence is MKVTSYSRILIILAALVGALVVPLKA. In terms of domain architecture, SCP spans 34–149; that stretch reads VNAHNQARSQ…NGGTIISCNY (116 aa). 3 cysteine pairs are disulfide-bonded: C70–C138, C113–C117, and C133–C147.

Belongs to the CRISP family. As to expression, expressed in flowers, stems and roots but not in leaves.

Functionally, probably involved in the defense reaction of plants against pathogens. This Arabidopsis thaliana (Mouse-ear cress) protein is Pathogenesis-related protein 1.